A 180-amino-acid chain; its full sequence is 6,7-dimethyl-8-ribityllumazine synthase (180 aa).

5-amino-6-(D-ribitylamino)uracil contacts are provided by residues phenylalanine 23, 61–63 (SFE), and 85–87 (AVI). 90 to 91 (QT) lines the (2S)-2-hydroxy-3-oxobutyl phosphate pocket. Histidine 93 (proton donor) is an active-site residue. Phenylalanine 118 is a 5-amino-6-(D-ribitylamino)uracil binding site. Residue arginine 132 coordinates (2S)-2-hydroxy-3-oxobutyl phosphate.

The protein belongs to the DMRL synthase family.

It carries out the reaction (2S)-2-hydroxy-3-oxobutyl phosphate + 5-amino-6-(D-ribitylamino)uracil = 6,7-dimethyl-8-(1-D-ribityl)lumazine + phosphate + 2 H2O + H(+). Its pathway is cofactor biosynthesis; riboflavin biosynthesis; riboflavin from 2-hydroxy-3-oxobutyl phosphate and 5-amino-6-(D-ribitylamino)uracil: step 1/2. Catalyzes the formation of 6,7-dimethyl-8-ribityllumazine by condensation of 5-amino-6-(D-ribitylamino)uracil with 3,4-dihydroxy-2-butanone 4-phosphate. This is the penultimate step in the biosynthesis of riboflavin. The chain is 6,7-dimethyl-8-ribityllumazine synthase from Gloeobacter violaceus (strain ATCC 29082 / PCC 7421).